The following is a 713-amino-acid chain: Leucine-rich repeat neuronal protein 2 (713 aa).

Residues 1–18 form the signal peptide; it reads MRLLVAPLLLAWVAGATA. The Extracellular segment spans residues 19–630; it reads AVPVVPWHVP…CHRALGDRPG (612 aa). The LRRNT domain occupies 20–69; it reads VPVVPWHVPCPPQCACQIRPWYTPRSSYREATTVDCNDLFLTAVPPALPA. 12 LRR repeats span residues 70–91, 94–115, 118–139, 142–163, 166–187, 190–211, 214–235, 238–259, 262–283, 286–305, 311–333, and 336–357; these read GTQTLLLQSNSIVRVDQSELGY, NLTELDLSQNSFSDARDCDFHA, QLLSLHLEENQLTRLEDHSFAG, SLQELYLNHNQLYRIAPRAFSG, NLLRLHLNSNLLRAIDSRWFEM, NLEILMIGGNKVDAILDMNFRP, NLRSLVLAGMNLREISDYALEG, SLESLSFYDNQLARVPRRALEQ, GLKFLDLNKNPLQRVGPGDFAN, HLKELGLNNMEELVSIDKFA, ELTKLDITNNPRLSFIHPRAFHH, and QMETLMLNNNALSALHQQTVES. A glycan (N-linked (GlcNAc...) asparagine) is linked at Asn94. In terms of domain architecture, LRRCT spans 369-422; the sequence is NPIRCDCVIRWANATGTRVRFIEPQSTLCAEPPDLQRLPVREVPFREMTDHCLP. Residue Asn381 is glycosylated (N-linked (GlcNAc...) asparagine). The Ig-like C2-type domain maps to 422–511; it reads PLISPRSFPP…LVGADTKTVS (90 aa). A disulfide bridge links Cys445 with Cys497. N-linked (GlcNAc...) asparagine glycans are attached at residues Asn555 and Asn583. Residues 631–651 form a helical membrane-spanning segment; the sequence is LIAILALAVLLLAAGLAAHLG. Over 652–713 the chain is Cytoplasmic; sequence TGQPRKGVGG…TLLPPLSQNS (62 aa).

In terms of tissue distribution, overamplified in malignant gliomas.

It localises to the membrane. The protein is Leucine-rich repeat neuronal protein 2 (LRRN2) of Homo sapiens (Human).